The primary structure comprises 351 residues: Auxin-responsive protein IAA27 (351 aa).

The interval 1-37 (MMNLISFETPPLGRRSQDGGSSSSSITAATTTTNKAK) is disordered. Over residues 21 to 34 (SSSSSITAATTTTN) the composition is skewed to low complexity. A PB1 domain is found at 233 to 327 (NMFAKVHMDG…SAKRLYIAKN (95 aa)).

Belongs to the Aux/IAA family. As to quaternary structure, homodimers and heterodimers. In terms of tissue distribution, expressed in roots and seedlings.

It is found in the nucleus. Its function is as follows. Aux/IAA proteins are short-lived transcriptional factors that function as repressors of early auxin response genes at low auxin concentrations. This Oryza sativa subsp. japonica (Rice) protein is Auxin-responsive protein IAA27 (IAA27).